A 260-amino-acid chain; its full sequence is 3'-5' ssDNA/RNA exonuclease TatD (260 aa).

Positions 91, 127, and 152 each coordinate a divalent metal cation.

It belongs to the metallo-dependent hydrolases superfamily. TatD-type hydrolase family. TatD subfamily. In terms of assembly, monomer. The cofactor is Mg(2+).

It localises to the cytoplasm. In terms of biological role, 3'-5' exonuclease that prefers single-stranded DNA and RNA. May play a role in the H(2)O(2)-induced DNA damage repair. In Enterobacter lignolyticus (strain SCF1), this protein is 3'-5' ssDNA/RNA exonuclease TatD.